The chain runs to 48 residues: Omega-agatoxin-Aa5a (48 aa).

Intrachain disulfides connect cysteine 3–cysteine 16, cysteine 10–cysteine 21, cysteine 15–cysteine 32, and cysteine 23–cysteine 30.

Belongs to the neurotoxin 02 (plectoxin) family. As to expression, expressed by the venom gland.

The protein resides in the secreted. Its function is as follows. The toxin blocks voltage-gated calcium channels in rat cerebellar granule cells (IC(50)=200 nM). In Agelenopsis aperta (North American funnel-web spider), this protein is Omega-agatoxin-Aa5a.